Here is a 151-residue protein sequence, read N- to C-terminus: Single-stranded DNA-binding protein, mitochondrial (151 aa).

The N-terminal 16 residues, 1–16 (MFRRPVLQVFRQFVRQ), are a transit peptide targeting the mitochondrion. In terms of domain architecture, SSB spans 30-141 (LNRVQLLGRV…IIADNIIFLS (112 aa)). Phosphoserine occurs at positions 67 and 79. N6-acetyllysine is present on lysine 113. The residue at position 122 (lysine 122) is an N6-succinyllysine.

In terms of assembly, homotetramer. Interacts with MPG/AAG, through inhibition of its glycosylase activity it potentially prevents formation of DNA breaks in ssDNA, ensuring that base removal primarily occurs in dsDNA. Interacts with POLDIP2. Interacts with PRIMPOL.

The protein resides in the mitochondrion. It is found in the mitochondrion matrix. It localises to the mitochondrion nucleoid. Binds preferentially and cooperatively to pyrimidine rich single-stranded DNA (ss-DNA). In vitro, required to maintain the copy number of mitochondrial DNA (mtDNA) and plays a crucial role during mtDNA replication by stimulating the activity of the replisome components POLG and TWNK at the replication fork. Promotes the activity of the gamma complex polymerase POLG, largely by organizing the template DNA and eliminating secondary structures to favor ss-DNA conformations that facilitate POLG activity. In addition it is able to promote the 5'-3' unwinding activity of the mtDNA helicase TWNK. May also function in mtDNA repair. This Rattus norvegicus (Rat) protein is Single-stranded DNA-binding protein, mitochondrial (Ssbp1).